The sequence spans 439 residues: ATP-dependent protease ATPase subunit HslU (439 aa).

Residues Ile17, 59-64 (GVGKTE), Asp251, Glu317, and Arg389 each bind ATP.

Belongs to the ClpX chaperone family. HslU subfamily. As to quaternary structure, a double ring-shaped homohexamer of HslV is capped on each side by a ring-shaped HslU homohexamer. The assembly of the HslU/HslV complex is dependent on binding of ATP.

The protein resides in the cytoplasm. In terms of biological role, ATPase subunit of a proteasome-like degradation complex; this subunit has chaperone activity. The binding of ATP and its subsequent hydrolysis by HslU are essential for unfolding of protein substrates subsequently hydrolyzed by HslV. HslU recognizes the N-terminal part of its protein substrates and unfolds these before they are guided to HslV for hydrolysis. This is ATP-dependent protease ATPase subunit HslU from Campylobacter jejuni subsp. jejuni serotype O:6 (strain 81116 / NCTC 11828).